The following is a 248-amino-acid chain: Triosephosphate isomerase (248 aa).

Substrate is bound by residues Asn10 and Lys12. His95 functions as the Electrophile in the catalytic mechanism. Catalysis depends on Glu165, which acts as the Proton acceptor.

Belongs to the triosephosphate isomerase family. In terms of assembly, homodimer.

The catalysed reaction is D-glyceraldehyde 3-phosphate = dihydroxyacetone phosphate. It functions in the pathway carbohydrate biosynthesis; gluconeogenesis. Its pathway is carbohydrate degradation; glycolysis; D-glyceraldehyde 3-phosphate from glycerone phosphate: step 1/1. The chain is Triosephosphate isomerase (TPI1) from Kluyveromyces marxianus (Yeast).